The primary structure comprises 331 residues: Fe-S cluster assembly protein DRE2 (331 aa).

The segment at 1-146 (MSEILLLLHP…MPTFKKPVSS (146 aa)) is N-terminal SAM-like domain. Residues 142–164 (KPVSSPVTLTDTSANNTDAEDDL) form a disordered region. Positions 146 to 158 (SPVTLTDTSANNT) are enriched in polar residues. The tract at residues 147–202 (PVTLTDTSANNTDAEDDLSMKRKLDSTKLAYFSDDSSGEEDDLIDENELIADSHKF) is linker. 4 residues coordinate [2Fe-2S] cluster: cysteine 212, cysteine 224, cysteine 227, and cysteine 229. A fe-S binding site A region spans residues 212 to 229 (CELPNGKKRKKACKDCTC). [4Fe-4S] cluster is bound by residues cysteine 294, cysteine 297, cysteine 305, and cysteine 308. 2 consecutive short sequence motifs (cx2C motif) follow at residues 294-297 (CSSC) and 305-308 (CDGC). Residues 294-308 (CSSCALGDAFRCDGC) form a fe-S binding site B region.

It belongs to the anamorsin family. Monomer. Interacts with TAH18. Interacts with MIA40. Requires [2Fe-2S] cluster as cofactor. [4Fe-4S] cluster is required as a cofactor.

Its subcellular location is the cytoplasm. The protein resides in the mitochondrion intermembrane space. In terms of biological role, component of the cytosolic iron-sulfur (Fe-S) protein assembly (CIA) machinery required for the maturation of extramitochondrial Fe-S proteins. Part of an electron transfer chain functioning in an early step of cytosolic Fe-S biogenesis, facilitating the de novo assembly of a [4Fe-4S] cluster on the scaffold complex CFD1-NBP35. Electrons are transferred to DRE2 from NADPH via the FAD- and FMN-containing protein TAH18. TAH18-DRE2 are also required for the assembly of the diferric tyrosyl radical cofactor of ribonucleotide reductase (RNR), probably by providing electrons for reduction during radical cofactor maturation in the catalytic small subunit RNR2. The sequence is that of Fe-S cluster assembly protein DRE2 from Clavispora lusitaniae (strain ATCC 42720) (Yeast).